The chain runs to 535 residues: T-complex protein 1 subunit beta (535 aa).

Residue alanine 2 is modified to N-acetylalanine. At serine 3 the chain carries Phosphoserine. Lysine 13 is subject to N6-acetyllysine. Glycine 44 contacts ADP. Residue glycine 44 participates in ATP binding. Aspartate 97 lines the Mg(2+) pocket. The ADP site is built by glycine 98, threonine 99, threonine 100, serine 101, serine 168, and serine 169. ATP contacts are provided by glycine 98, threonine 99, and threonine 100. Lysine 181 is subject to N6-acetyllysine. Lysine 248 participates in a covalent cross-link: Glycyl lysine isopeptide (Lys-Gly) (interchain with G-Cter in SUMO2). Residue serine 260 is modified to Phosphoserine. Threonine 261 carries the phosphothreonine modification. 3 residues coordinate ADP: glycine 410, glutamate 495, and lysine 500. Positions 495 and 500 each coordinate ATP.

It belongs to the TCP-1 chaperonin family. As to quaternary structure, component of the chaperonin-containing T-complex (TRiC), a hexadecamer composed of two identical back-to-back stacked rings enclosing a protein folding chamber. Each ring is made up of eight different subunits: TCP1/CCT1, CCT2, CCT3, CCT4, CCT5, CCT6A/CCT6, CCT7, CCT8. Interacts with PACRG. Interacts with FLCN. Interacts with DLEC1. Interacts with SVEP1. In terms of processing, the N-terminus is blocked.

It localises to the cytoplasm. It catalyses the reaction ATP + H2O = ADP + phosphate + H(+). Functionally, component of the chaperonin-containing T-complex (TRiC), a molecular chaperone complex that assists the folding of actin, tubulin and other proteins upon ATP hydrolysis. The TRiC complex mediates the folding of WRAP53/TCAB1, thereby regulating telomere maintenance. As part of the TRiC complex may play a role in the assembly of BBSome, a complex involved in ciliogenesis regulating transports vesicles to the cilia. The sequence is that of T-complex protein 1 subunit beta (Cct2) from Mus musculus (Mouse).